The primary structure comprises 314 residues: Homeobox-leucine zipper protein HAT7 (314 aa).

A disordered region spans residues 77 to 109; that stretch reads HHHLTQKSPTTTNNMNDQDQVGEEDNLSDDGSH. A compositionally biased stretch (polar residues) spans 82 to 95; it reads QKSPTTTNNMNDQD. A DNA-binding region (homeobox) is located at residues 112 to 171; the sequence is LGEKKKRLNLEQVRALEKSFELGNKLEPERKMQLAKALGLQPRQIAIWFQNRRARWKTKQ. Positions 172-207 are leucine-zipper; the sequence is LERDYDSLKKQFDVLKSDNDSLLAHNKKLHAELVAL.

It belongs to the HD-ZIP homeobox family. Class I subfamily. As to expression, expressed predominantly in flowers, and in the cortex of the root and the stem.

The protein localises to the nucleus. Functionally, probable transcription factor. The chain is Homeobox-leucine zipper protein HAT7 (HAT7) from Arabidopsis thaliana (Mouse-ear cress).